A 355-amino-acid polypeptide reads, in one-letter code: 3-dehydroquinate synthase (355 aa).

NAD(+) contacts are provided by residues 71–76 (EGEERK), 105–109 (GVVGD), 129–130 (TS), Lys142, and Lys151. Residues Glu184, His246, and His263 each coordinate Zn(2+).

The protein belongs to the sugar phosphate cyclases superfamily. Dehydroquinate synthase family. Requires Co(2+) as cofactor. Zn(2+) serves as cofactor. The cofactor is NAD(+).

It is found in the cytoplasm. It carries out the reaction 7-phospho-2-dehydro-3-deoxy-D-arabino-heptonate = 3-dehydroquinate + phosphate. The protein operates within metabolic intermediate biosynthesis; chorismate biosynthesis; chorismate from D-erythrose 4-phosphate and phosphoenolpyruvate: step 2/7. Its function is as follows. Catalyzes the conversion of 3-deoxy-D-arabino-heptulosonate 7-phosphate (DAHP) to dehydroquinate (DHQ). This is 3-dehydroquinate synthase from Streptococcus pneumoniae (strain ATCC 700669 / Spain 23F-1).